Reading from the N-terminus, the 408-residue chain is S-adenosylmethionine synthase (408 aa).

142 to 147 provides a ligand contact to ATP; sequence GEGSGD.

This sequence belongs to the AdoMet synthase 2 family. It depends on Mg(2+) as a cofactor.

The enzyme catalyses L-methionine + ATP + H2O = S-adenosyl-L-methionine + phosphate + diphosphate. Its pathway is amino-acid biosynthesis; S-adenosyl-L-methionine biosynthesis; S-adenosyl-L-methionine from L-methionine: step 1/1. Its function is as follows. Catalyzes the formation of S-adenosylmethionine from methionine and ATP. The sequence is that of S-adenosylmethionine synthase from Halobacterium salinarum (strain ATCC 29341 / DSM 671 / R1).